A 266-amino-acid polypeptide reads, in one-letter code: Phosphatidylglycerol--prolipoprotein diacylglyceryl transferase (266 aa).

4 helical membrane-spanning segments follow: residues 14–34, 55–75, 91–111, and 117–137; these read FGPL…AFFW, FLFY…ILFY, WKGG…MWLF, and VSMF…LFFG. Arg138 contributes to the a 1,2-diacyl-sn-glycero-3-phospho-(1'-sn-glycerol) binding site. Transmembrane regions (helical) follow at residues 172–192, 201–221, and 235–255; these read YPTQ…ILMF, GAAS…VEFF, and WVTM…ALVV.

This sequence belongs to the Lgt family.

The protein resides in the cell inner membrane. The catalysed reaction is L-cysteinyl-[prolipoprotein] + a 1,2-diacyl-sn-glycero-3-phospho-(1'-sn-glycerol) = an S-1,2-diacyl-sn-glyceryl-L-cysteinyl-[prolipoprotein] + sn-glycerol 1-phosphate + H(+). Its pathway is protein modification; lipoprotein biosynthesis (diacylglyceryl transfer). In terms of biological role, catalyzes the transfer of the diacylglyceryl group from phosphatidylglycerol to the sulfhydryl group of the N-terminal cysteine of a prolipoprotein, the first step in the formation of mature lipoproteins. The chain is Phosphatidylglycerol--prolipoprotein diacylglyceryl transferase from Hydrogenovibrio crunogenus (strain DSM 25203 / XCL-2) (Thiomicrospira crunogena).